The following is a 307-amino-acid chain: UDP-3-O-acyl-N-acetylglucosamine deacetylase (307 aa).

3 residues coordinate Zn(2+): His-78, His-241, and Asp-245. His-268 functions as the Proton donor in the catalytic mechanism.

It belongs to the LpxC family. Zn(2+) is required as a cofactor.

The catalysed reaction is a UDP-3-O-[(3R)-3-hydroxyacyl]-N-acetyl-alpha-D-glucosamine + H2O = a UDP-3-O-[(3R)-3-hydroxyacyl]-alpha-D-glucosamine + acetate. Its pathway is glycolipid biosynthesis; lipid IV(A) biosynthesis; lipid IV(A) from (3R)-3-hydroxytetradecanoyl-[acyl-carrier-protein] and UDP-N-acetyl-alpha-D-glucosamine: step 2/6. Catalyzes the hydrolysis of UDP-3-O-myristoyl-N-acetylglucosamine to form UDP-3-O-myristoylglucosamine and acetate, the committed step in lipid A biosynthesis. In Acidovorax sp. (strain JS42), this protein is UDP-3-O-acyl-N-acetylglucosamine deacetylase.